Consider the following 491-residue polypeptide: Transmembrane protein 39B (491 aa).

The interval Met1 to Leu56 is disordered. N-linked (GlcNAc...) asparagine glycans are attached at residues Asn9, Asn20, Asn29, and Asn45. Polar residues-rich tracts occupy residues Asn9 to Val36 and Arg44 to Leu56. A run of 8 helical transmembrane segments spans residues Leu79–Ile99, Thr115–Ala135, Leu152–Gly172, Thr185–Phe205, Glu290–Val310, Cys322–Pro342, Ile423–Met443, and His449–Leu469.

Belongs to the TMEM39 family. In terms of tissue distribution, expressed in the ovary, followed by the intestine and brain.

Its subcellular location is the endoplasmic reticulum membrane. May protect the cells against DNA damage caused by exposure to the cold-warming stress and facilitates tissue damage repair during the recovery phase. The polypeptide is Transmembrane protein 39B (Danio rerio (Zebrafish)).